The chain runs to 609 residues: Glutamine--fructose-6-phosphate aminotransferase [isomerizing] (609 aa).

Cys2 functions as the Nucleophile; for GATase activity in the catalytic mechanism. Residues 2–219 form the Glutamine amidotransferase type-2 domain; it reads CGIFGYLGNQ…SGEFAIVSQG (218 aa). 2 consecutive SIS domains span residues 285–426 and 458–599; these read LSDV…VHGA and WAQP…IDCP. Lys604 acts as the For Fru-6P isomerization activity in catalysis.

As to quaternary structure, homodimer.

It localises to the cytoplasm. The catalysed reaction is D-fructose 6-phosphate + L-glutamine = D-glucosamine 6-phosphate + L-glutamate. In terms of biological role, catalyzes the first step in hexosamine metabolism, converting fructose-6P into glucosamine-6P using glutamine as a nitrogen source. This is Glutamine--fructose-6-phosphate aminotransferase [isomerizing] from Chlamydia pneumoniae (Chlamydophila pneumoniae).